Consider the following 201-residue polypeptide: Small ribosomal subunit protein uS4 (201 aa).

Residues Thr-91 to Gln-154 form the S4 RNA-binding domain.

This sequence belongs to the universal ribosomal protein uS4 family. In terms of assembly, part of the 30S ribosomal subunit. Contacts protein S5. The interaction surface between S4 and S5 is involved in control of translational fidelity.

Functionally, one of the primary rRNA binding proteins, it binds directly to 16S rRNA where it nucleates assembly of the body of the 30S subunit. In terms of biological role, with S5 and S12 plays an important role in translational accuracy. The protein is Small ribosomal subunit protein uS4 of Corynebacterium ammoniagenes (Brevibacterium ammoniagenes).